A 197-amino-acid chain; its full sequence is Phosphoheptose isomerase (197 aa).

Residues leucine 36 to glutamate 197 form the SIS domain. Substrate is bound at residue asparagine 51–glycine 53. Positions 60 and 64 each coordinate Zn(2+). Substrate is bound by residues glutamate 64, asparagine 93–aspartate 94, serine 119–serine 121, serine 124, and glutamine 174. Residues glutamine 174 and histidine 182 each contribute to the Zn(2+) site.

This sequence belongs to the SIS family. GmhA subfamily. In terms of assembly, homotetramer. The cofactor is Zn(2+).

It localises to the cytoplasm. The enzyme catalyses 2 D-sedoheptulose 7-phosphate = D-glycero-alpha-D-manno-heptose 7-phosphate + D-glycero-beta-D-manno-heptose 7-phosphate. Its pathway is carbohydrate biosynthesis; D-glycero-D-manno-heptose 7-phosphate biosynthesis; D-glycero-alpha-D-manno-heptose 7-phosphate and D-glycero-beta-D-manno-heptose 7-phosphate from sedoheptulose 7-phosphate: step 1/1. In terms of biological role, catalyzes the isomerization of sedoheptulose 7-phosphate in D-glycero-D-manno-heptose 7-phosphate. The sequence is that of Phosphoheptose isomerase from Thiobacillus denitrificans (strain ATCC 25259 / T1).